Reading from the N-terminus, the 56-residue chain is Large ribosomal subunit protein eL37 (56 aa).

Zn(2+) contacts are provided by C19, C22, C34, and C37. A C4-type zinc finger spans residues 19 to 37; sequence CRRCGRLSYNFNRKTCVAC.

It belongs to the eukaryotic ribosomal protein eL37 family. The cofactor is Zn(2+).

Functionally, binds to the 23S rRNA. The polypeptide is Large ribosomal subunit protein eL37 (Methanothrix thermoacetophila (strain DSM 6194 / JCM 14653 / NBRC 101360 / PT) (Methanosaeta thermophila)).